Here is a 142-residue protein sequence, read N- to C-terminus: Transcriptional regulator MraZ (142 aa).

SpoVT-AbrB domains lie at 5 to 51 and 77 to 120; these read ASAL…PRPE and AMDV…DSQT.

Belongs to the MraZ family. As to quaternary structure, forms oligomers.

The protein localises to the cytoplasm. It is found in the nucleoid. The chain is Transcriptional regulator MraZ from Burkholderia multivorans (strain ATCC 17616 / 249).